The following is a 344-amino-acid chain: Arginine N-succinyltransferase (344 aa).

A succinyl-CoA-binding site is contributed by Leu-125. Catalysis depends on His-229, which acts as the Proton donor.

This sequence belongs to the arginine N-succinyltransferase family.

It carries out the reaction succinyl-CoA + L-arginine = N(2)-succinyl-L-arginine + CoA + H(+). It participates in amino-acid degradation; L-arginine degradation via AST pathway; L-glutamate and succinate from L-arginine: step 1/5. In terms of biological role, catalyzes the transfer of succinyl-CoA to arginine to produce N(2)-succinylarginine. This Escherichia coli O17:K52:H18 (strain UMN026 / ExPEC) protein is Arginine N-succinyltransferase.